The chain runs to 188 residues: VQ motif-containing protein 18 (188 aa).

3 disordered regions span residues 1–20 (MEITQYQSFHEGSSSRVSMN), 58–92 (LTGKPAPGEAKTGKKRAKSRITTPQEPVCDDHQPV), and 157–188 (GFIFNNNNNNNNNNNNNNNNNTNFDTKAHNSS). Residues 51–60 (FRSLVQSLTG) carry the VQ motif. The span at 161–179 (NNNNNNNNNNNNNNNNNTN) shows a compositional bias: low complexity.

The protein localises to the nucleus. In terms of biological role, may function as positive regulator of plant growth. The sequence is that of VQ motif-containing protein 18 from Arabidopsis thaliana (Mouse-ear cress).